Here is a 225-residue protein sequence, read N- to C-terminus: Phosphoserine phosphatase (225 aa).

At Met-1 the chain carries N-acetylmethionine. The active-site Nucleophile is Asp-20. Mg(2+)-binding residues include Asp-20 and Asp-22. 20 to 22 contacts L-serine; it reads DVD. Asp-22 serves as the catalytic Proton donor. Met-52 provides a ligand contact to O-phospho-L-serine. Gly-53 contacts phosphate. L-serine contacts are provided by residues 109–111 and Lys-158; that span reads SGG. O-phospho-L-serine contacts are provided by residues 109 to 111 and Lys-158; that span reads SGG. Asp-179 lines the Mg(2+) pocket. Residue Thr-182 coordinates O-phospho-L-serine. Thr-182 serves as a coordination point for phosphate.

The protein belongs to the HAD-like hydrolase superfamily. SerB family. As to quaternary structure, homodimer. Mg(2+) is required as a cofactor.

The protein resides in the cytoplasm. Its subcellular location is the cytosol. The catalysed reaction is O-phospho-L-serine + H2O = L-serine + phosphate. It catalyses the reaction O-phospho-D-serine + H2O = D-serine + phosphate. The protein operates within amino-acid biosynthesis; L-serine biosynthesis; L-serine from 3-phospho-D-glycerate: step 3/3. In terms of biological role, catalyzes the last irreversible step in the biosynthesis of L-serine from carbohydrates, the dephosphorylation of O-phospho-L-serine to L-serine. L-serine can then be used in protein synthesis, to produce other amino acids, in nucleotide metabolism or in glutathione synthesis, or can be racemized to D-serine, a neuromodulator. May also act on O-phospho-D-serine. The polypeptide is Phosphoserine phosphatase (Bos taurus (Bovine)).